The chain runs to 114 residues: Flagellar hook-basal body complex protein FliE (114 aa).

The protein belongs to the FliE family.

The protein resides in the bacterial flagellum basal body. The sequence is that of Flagellar hook-basal body complex protein FliE from Burkholderia vietnamiensis (strain G4 / LMG 22486) (Burkholderia cepacia (strain R1808)).